Reading from the N-terminus, the 551-residue chain is Putative transport protein HI_0035 (551 aa).

Helical transmembrane passes span 4 to 24 (IAIT…IGHW), 28 to 48 (GVGL…HFTN), 65 to 85 (FGLI…FFSS), 95 to 115 (AFAI…HKIA), and 157 to 177 (VSYA…MWLI). RCK C-terminal domains follow at residues 191-275 (RFNA…IIGH) and 277-360 (VDAP…VIGN). The next 6 helical transmembrane spans lie at 370 to 390 (MLPV…PFYI), 402 to 424 (AGGP…LYWF), 438 to 458 (IVLF…DTLV), 463 to 483 (LEWM…VGTI), 492 to 512 (YLTI…LAFA), and 529 to 549 (VYPL…VLLW).

This sequence belongs to the AAE transporter (TC 2.A.81) family. YidE subfamily.

The protein resides in the cell membrane. The polypeptide is Putative transport protein HI_0035 (Haemophilus influenzae (strain ATCC 51907 / DSM 11121 / KW20 / Rd)).